Reading from the N-terminus, the 83-residue chain is Cytochrome b559 subunit alpha (83 aa).

Residues 21–35 (IIHTITVPMLFLAGW) traverse the membrane as a helical segment. Histidine 23 lines the heme pocket.

Belongs to the PsbE/PsbF family. As to quaternary structure, heterodimer of an alpha subunit and a beta subunit. PSII is composed of 1 copy each of membrane proteins PsbA, PsbB, PsbC, PsbD, PsbE, PsbF, PsbH, PsbI, PsbJ, PsbK, PsbL, PsbM, PsbT, PsbX, PsbY, PsbZ, Psb30/Ycf12, peripheral proteins PsbO, CyanoQ (PsbQ), PsbU, PsbV and a large number of cofactors. It forms dimeric complexes. Heme b serves as cofactor.

The protein resides in the cellular thylakoid membrane. Functionally, this b-type cytochrome is tightly associated with the reaction center of photosystem II (PSII). PSII is a light-driven water:plastoquinone oxidoreductase that uses light energy to abstract electrons from H(2)O, generating O(2) and a proton gradient subsequently used for ATP formation. It consists of a core antenna complex that captures photons, and an electron transfer chain that converts photonic excitation into a charge separation. This Acaryochloris marina (strain MBIC 11017) protein is Cytochrome b559 subunit alpha.